The primary structure comprises 473 residues: Arginine biosynthesis bifunctional protein ArgJ, mitochondrial (473 aa).

Threonine 201, lysine 230, threonine 241, glutamate 328, asparagine 468, and threonine 473 together coordinate substrate. Threonine 241 functions as the Nucleophile in the catalytic mechanism.

The protein belongs to the ArgJ family. As to quaternary structure, heterodimer of an alpha and a beta chain. The alpha and beta chains are autoproteolytically processed from a single precursor protein within the mitochondrion.

The protein localises to the mitochondrion matrix. The catalysed reaction is N(2)-acetyl-L-ornithine + L-glutamate = N-acetyl-L-glutamate + L-ornithine. The enzyme catalyses L-glutamate + acetyl-CoA = N-acetyl-L-glutamate + CoA + H(+). It functions in the pathway amino-acid biosynthesis; L-arginine biosynthesis; L-ornithine and N-acetyl-L-glutamate from L-glutamate and N(2)-acetyl-L-ornithine (cyclic): step 1/1. The protein operates within amino-acid biosynthesis; L-arginine biosynthesis; N(2)-acetyl-L-ornithine from L-glutamate: step 1/4. In terms of biological role, catalyzes two activities which are involved in the cyclic version of arginine biosynthesis: the synthesis of acetylglutamate from glutamate and acetyl-CoA, and of ornithine by transacetylation between acetylornithine and glutamate. In Paracoccidioides brasiliensis (strain Pb18), this protein is Arginine biosynthesis bifunctional protein ArgJ, mitochondrial.